The sequence spans 69 residues: Mu-conotoxin-like Am3.3 (69 aa).

The first 20 residues, 1 to 20 (MMSKLGVLLTICLLLFPLTA), serve as a signal peptide directing secretion. Positions 21–52 (VPLDGDQPADRPAERMQDDISSENHPMFDAIR) are excised as a propeptide. Cysteine 68 is modified (cysteine amide).

The protein belongs to the conotoxin M family. In terms of processing, is not hydroxylated. Post-translationally, contains 3 disulfide bonds. Expressed by the venom duct.

The protein resides in the secreted. In terms of biological role, mu-conotoxins block voltage-gated sodium channels (Nav). The protein is Mu-conotoxin-like Am3.3 of Conus amadis (Amadis cone).